The primary structure comprises 101 residues: Protein S100-A4 (101 aa).

Ala2 carries the N-acetylalanine modification. 2 EF-hand domains span residues 12 to 47 and 50 to 85; these read IVST…SFLG and TDEA…IAMM. Residues Lys28 and Glu33 each contribute to the Ca(2+) site. An N6-acetyllysine modification is found at Lys35. Residues Asp63, Asn65, Asp67, Glu69, and Glu74 each coordinate Ca(2+).

Belongs to the S-100 family. In terms of assembly, homodimer. Interacts with PPFIBP1 in a calcium-dependent mode. Interacts with PGLYRP1; this complex acts as a chemoattractant that promotes lymphocyte movement. Interacts with MYH9; this interaction increases cell motility. Interacts with Annexin 2/ANXA2. Interacts with TP53; this interaction promotes TP53 degradation. Interacts with CCR5 and CXCR3. Interacts with FCGR3A; this interaction inhibits PKC-dependent phosphorylation of FCGR3A. As to expression, specifically expressed in different metastatic cells.

It is found in the secreted. The protein localises to the nucleus. Its subcellular location is the cytoplasm. In terms of biological role, calcium-binding protein that plays a role in various cellular processes including motility, angiogenesis, cell differentiation, apoptosis, and autophagy. Increases cell motility and invasiveness by interacting with non-muscle myosin heavy chain (NMMHC) IIA/MYH9. Mechanistically, promotes filament depolymerization and increases the amount of soluble myosin-IIA, resulting in the formation of stable protrusions facilitating chemotaxis. Also modulates the pro-apoptotic function of TP53 by binding to its C-terminal transactivation domain within the nucleus and reducing its protein levels. Within the extracellular space, stimulates cytokine production including granulocyte colony-stimulating factor and CCL24 from T-lymphocytes. In addition, stimulates T-lymphocyte chemotaxis by acting as a chemoattractant complex with PGLYRP1 that promotes lymphocyte migration via CCR5 and CXCR3 receptors. This is Protein S100-A4 (S100a4) from Mus musculus (Mouse).